The following is a 261-amino-acid chain: Cytochrome c oxidase subunit 3 (261 aa).

Topologically, residues 1-15 (MTHQTHAYHMVNPSP) are mitochondrial matrix. Residues 16 to 34 (WPLTGALSALLMTSGLVMW) form a helical membrane-spanning segment. The Mitochondrial intermembrane portion of the chain corresponds to 35-40 (FHYNST). A helical transmembrane segment spans residues 41-66 (LLLTLGLTTNLLTMYQWWRDIIREST). Topologically, residues 67 to 72 (FQGHHT) are mitochondrial matrix. The helical transmembrane segment at 73–105 (PAVQKGLRYGMILFIISEVFFFSGFFWAFYHSS) threads the bilayer. The Mitochondrial intermembrane portion of the chain corresponds to 106-128 (LAPTPELGGCWPPTGIHPLNPME). A helical transmembrane segment spans residues 129-152 (VPLLNTSVLLASGVSITWAHHSLM). The Mitochondrial matrix segment spans residues 153–155 (EGN). A helical membrane pass occupies residues 156–183 (RKHMLQALFITISLGIYFTLLQASEYYE). Residues 184–190 (APFTISD) are Mitochondrial intermembrane-facing. A helical membrane pass occupies residues 191-223 (GVYGSTFFVATGFHGLHVIIGSTFLIVCFLRQL). At 224–232 (KFHFTSNHH) the chain is on the mitochondrial matrix side. Residues 233–256 (FGFEAAAWYWHFVDVVWLFLYVSI) traverse the membrane as a helical segment. Topologically, residues 257 to 261 (YWWGS) are mitochondrial intermembrane.

It belongs to the cytochrome c oxidase subunit 3 family. As to quaternary structure, component of the cytochrome c oxidase (complex IV, CIV), a multisubunit enzyme composed of 14 subunits. The complex is composed of a catalytic core of 3 subunits MT-CO1, MT-CO2 and MT-CO3, encoded in the mitochondrial DNA, and 11 supernumerary subunits COX4I, COX5A, COX5B, COX6A, COX6B, COX6C, COX7A, COX7B, COX7C, COX8 and NDUFA4, which are encoded in the nuclear genome. The complex exists as a monomer or a dimer and forms supercomplexes (SCs) in the inner mitochondrial membrane with NADH-ubiquinone oxidoreductase (complex I, CI) and ubiquinol-cytochrome c oxidoreductase (cytochrome b-c1 complex, complex III, CIII), resulting in different assemblies (supercomplex SCI(1)III(2)IV(1) and megacomplex MCI(2)III(2)IV(2)).

The protein localises to the mitochondrion inner membrane. The catalysed reaction is 4 Fe(II)-[cytochrome c] + O2 + 8 H(+)(in) = 4 Fe(III)-[cytochrome c] + 2 H2O + 4 H(+)(out). Its function is as follows. Component of the cytochrome c oxidase, the last enzyme in the mitochondrial electron transport chain which drives oxidative phosphorylation. The respiratory chain contains 3 multisubunit complexes succinate dehydrogenase (complex II, CII), ubiquinol-cytochrome c oxidoreductase (cytochrome b-c1 complex, complex III, CIII) and cytochrome c oxidase (complex IV, CIV), that cooperate to transfer electrons derived from NADH and succinate to molecular oxygen, creating an electrochemical gradient over the inner membrane that drives transmembrane transport and the ATP synthase. Cytochrome c oxidase is the component of the respiratory chain that catalyzes the reduction of oxygen to water. Electrons originating from reduced cytochrome c in the intermembrane space (IMS) are transferred via the dinuclear copper A center (CU(A)) of subunit 2 and heme A of subunit 1 to the active site in subunit 1, a binuclear center (BNC) formed by heme A3 and copper B (CU(B)). The BNC reduces molecular oxygen to 2 water molecules using 4 electrons from cytochrome c in the IMS and 4 protons from the mitochondrial matrix. The chain is Cytochrome c oxidase subunit 3 (MT-CO3) from Rhinoceros unicornis (Greater Indian rhinoceros).